Reading from the N-terminus, the 176-residue chain is Ribosome rescue factor SmrB (176 aa).

In terms of domain architecture, Smr spans 98–173 (LDVHGLNQDQ…RSTAILFLIH (76 aa)).

This sequence belongs to the SmrB family. As to quaternary structure, associates with collided ribosomes, but not with correctly translating polysomes.

Functionally, acts as a ribosome collision sensor. Detects stalled/collided disomes (pairs of ribosomes where the leading ribosome is stalled and a second ribosome has collided with it) and endonucleolytically cleaves mRNA at the 5' boundary of the stalled ribosome. Stalled/collided disomes form a new interface (primarily via the 30S subunits) that binds SmrB. Cleaved mRNA becomes available for tmRNA ligation, leading to ribosomal subunit dissociation and rescue of stalled ribosomes. This is Ribosome rescue factor SmrB from Buchnera aphidicola subsp. Baizongia pistaciae (strain Bp).